An 862-amino-acid chain; its full sequence is Bifunctional uridylyltransferase/uridylyl-removing enzyme (862 aa).

The tract at residues 1–328 is uridylyltransferase; sequence MSTAAIPTDA…FPRRAGAAIV (328 aa). The interval 329 to 685 is uridylyl-removing; it reads INERFQAVRE…ARVSDADQGV (357 aa). Residues 447–563 form the HD domain; the sequence is VDQHIMMVLR…GRFADTVGTE (117 aa). ACT domains are found at residues 686–765 and 794–862; these read QVMV…DRPS and ILSL…RLHI.

Belongs to the GlnD family. It depends on Mg(2+) as a cofactor.

It catalyses the reaction [protein-PII]-L-tyrosine + UTP = [protein-PII]-uridylyl-L-tyrosine + diphosphate. The catalysed reaction is [protein-PII]-uridylyl-L-tyrosine + H2O = [protein-PII]-L-tyrosine + UMP + H(+). Uridylyltransferase (UTase) activity is inhibited by glutamine, while glutamine activates uridylyl-removing (UR) activity. Its function is as follows. Modifies, by uridylylation and deuridylylation, the PII regulatory proteins (GlnB and homologs), in response to the nitrogen status of the cell that GlnD senses through the glutamine level. Under low glutamine levels, catalyzes the conversion of the PII proteins and UTP to PII-UMP and PPi, while under higher glutamine levels, GlnD hydrolyzes PII-UMP to PII and UMP (deuridylylation). Thus, controls uridylylation state and activity of the PII proteins, and plays an important role in the regulation of nitrogen assimilation and metabolism. This Aromatoleum aromaticum (strain DSM 19018 / LMG 30748 / EbN1) (Azoarcus sp. (strain EbN1)) protein is Bifunctional uridylyltransferase/uridylyl-removing enzyme.